Reading from the N-terminus, the 870-residue chain is Leucine--tRNA ligase (870 aa).

Residues 42 to 52 (PYPSGKLHMGH) carry the 'HIGH' region motif. The 'KMSKS' region signature appears at 629 to 633 (KMSKS). Lys632 serves as a coordination point for ATP.

It belongs to the class-I aminoacyl-tRNA synthetase family.

The protein resides in the cytoplasm. It catalyses the reaction tRNA(Leu) + L-leucine + ATP = L-leucyl-tRNA(Leu) + AMP + diphosphate. The polypeptide is Leucine--tRNA ligase (Dechloromonas aromatica (strain RCB)).